The following is a 269-amino-acid chain: UPF0162 protein BU173 (269 aa).

Belongs to the UPF0162 family.

The chain is UPF0162 protein BU173 from Buchnera aphidicola subsp. Acyrthosiphon pisum (strain APS) (Acyrthosiphon pisum symbiotic bacterium).